Here is a 100-residue protein sequence, read N- to C-terminus: Large ribosomal subunit protein eL21 (100 aa).

Belongs to the eukaryotic ribosomal protein eL21 family.

The sequence is that of Large ribosomal subunit protein eL21 from Pyrobaculum arsenaticum (strain DSM 13514 / JCM 11321 / PZ6).